Reading from the N-terminus, the 406-residue chain is Phosphopentomutase (406 aa).

Residues D10, D305, H310, D346, H347, and H358 each coordinate Mn(2+).

Belongs to the phosphopentomutase family. Mn(2+) serves as cofactor.

The protein localises to the cytoplasm. It carries out the reaction 2-deoxy-alpha-D-ribose 1-phosphate = 2-deoxy-D-ribose 5-phosphate. The enzyme catalyses alpha-D-ribose 1-phosphate = D-ribose 5-phosphate. It participates in carbohydrate degradation; 2-deoxy-D-ribose 1-phosphate degradation; D-glyceraldehyde 3-phosphate and acetaldehyde from 2-deoxy-alpha-D-ribose 1-phosphate: step 1/2. Isomerase that catalyzes the conversion of deoxy-ribose 1-phosphate (dRib-1-P) and ribose 1-phosphate (Rib-1-P) to deoxy-ribose 5-phosphate (dRib-5-P) and ribose 5-phosphate (Rib-5-P), respectively. The polypeptide is Phosphopentomutase (Aliivibrio salmonicida (strain LFI1238) (Vibrio salmonicida (strain LFI1238))).